A 333-amino-acid polypeptide reads, in one-letter code: Endo-1,4-beta-xylanase (333 aa).

Residues 1–17 (MYLVAFMLLAILPTGYC) form the signal peptide. The GH10 domain maps to 18–330 (QLNTLAVRAG…KPAYQGIVDG (313 aa)). Glu147 (proton donor) is an active-site residue. The active-site Nucleophile is Glu252.

It belongs to the glycosyl hydrolase 10 (cellulase F) family.

It is found in the secreted. The enzyme catalyses Endohydrolysis of (1-&gt;4)-beta-D-xylosidic linkages in xylans.. It functions in the pathway glycan degradation; xylan degradation. Has xylanase activity. Seems to be involved in the release of sugars from the hemicellulolytic fraction in the compost. The sequence is that of Endo-1,4-beta-xylanase (xlnA) from Agaricus bisporus (White button mushroom).